A 310-amino-acid polypeptide reads, in one-letter code: Putative HTH-type transcriptional regulatory protein M1425_1284 (310 aa).

An HTH cro/C1-type domain is found at 125–180 (LKHKREEMGYSIGDVAKFLGVSRKAIYDYEKGDSDVSLEVAEKLIDLFGDDIIGDV). The H-T-H motif DNA-binding region spans 136-155 (IGDVAKFLGVSRKAIYDYEK).

This is Putative HTH-type transcriptional regulatory protein M1425_1284 from Saccharolobus islandicus (strain M.14.25 / Kamchatka #1) (Sulfolobus islandicus).